The following is a 498-amino-acid chain: uncharacterized protein (498 aa).

Position 329-336 (329-336 (GNPGTGKS)) interacts with ATP.

The protein resides in the secreted. It is found in the cell wall. This is an uncharacterized protein from Mycobacterium tuberculosis (strain CDC 1551 / Oshkosh).